Consider the following 453-residue polypeptide: Tubulin alpha chain (453 aa).

Glutamine 11 is a binding site for GTP. An N6-acetyllysine modification is found at lysine 40. 6 residues coordinate GTP: glutamate 71, glycine 144, threonine 145, threonine 179, asparagine 206, and asparagine 228. Glutamate 71 provides a ligand contact to Mg(2+). Glutamate 254 is an active-site residue.

This sequence belongs to the tubulin family. Dimer of alpha and beta chains. A typical microtubule is a hollow water-filled tube with an outer diameter of 25 nm and an inner diameter of 15 nM. Alpha-beta heterodimers associate head-to-tail to form protofilaments running lengthwise along the microtubule wall with the beta-tubulin subunit facing the microtubule plus end conferring a structural polarity. Microtubules usually have 13 protofilaments but different protofilament numbers can be found in some organisms and specialized cells. The cofactor is Mg(2+). Undergoes a tyrosination/detyrosination cycle, the cyclic removal and re-addition of a C-terminal tyrosine residue by the enzymes tubulin tyrosine carboxypeptidase (TTCP) and tubulin tyrosine ligase (TTL), respectively. Post-translationally, acetylation of alpha chains at Lys-40 stabilizes microtubules and affects affinity and processivity of microtubule motors. This modification has a role in multiple cellular functions, ranging from cell motility, cell cycle progression or cell differentiation to intracellular trafficking and signaling.

It localises to the cytoplasm. It is found in the cytoskeleton. It carries out the reaction GTP + H2O = GDP + phosphate + H(+). Tubulin is the major constituent of microtubules, a cylinder consisting of laterally associated linear protofilaments composed of alpha- and beta-tubulin heterodimers. Microtubules grow by the addition of GTP-tubulin dimers to the microtubule end, where a stabilizing cap forms. Below the cap, tubulin dimers are in GDP-bound state, owing to GTPase activity of alpha-tubulin. The polypeptide is Tubulin alpha chain (TUBA) (Neospora caninum (Coccidian parasite)).